Reading from the N-terminus, the 315-residue chain is MRPEDLARMSVAELRERFLDRNRALSPECEAALTTDPRAGAREVLRLILKRRHANRAEGQRLRHLLRYEGELWDGGVTLVAGVDEAGMAPLAGPVVAGACILPRDYRPRGIDDSKQLDRRERERLAEDIKANAVCWAVARAEVEEIDRLNIYRAGLLALTRAVQALTPAPGHVLVDARKLPELRLPQTPIIHGDALSLTIAAASILAKTTRDELMGELDALYPGYGFCNHKGYPTAEHFQALERLGACPIHRRSFQPVREALGLAPLQGELFAPPPESAAEPGGEGAIAGIAPGSAPCDVAEPLPARTPASARGI.

The region spanning 78 to 267 (TLVAGVDEAG…VREALGLAPL (190 aa)) is the RNase H type-2 domain. A divalent metal cation is bound by residues D84, E85, and D176. The disordered stretch occupies residues 273–292 (APPPESAAEPGGEGAIAGIA). Over residues 278–292 (SAAEPGGEGAIAGIA) the composition is skewed to low complexity.

This sequence belongs to the RNase HII family. It depends on Mn(2+) as a cofactor. The cofactor is Mg(2+).

Its subcellular location is the cytoplasm. It carries out the reaction Endonucleolytic cleavage to 5'-phosphomonoester.. Its function is as follows. Endonuclease that specifically degrades the RNA of RNA-DNA hybrids. The sequence is that of Ribonuclease HII from Anaeromyxobacter sp. (strain Fw109-5).